A 98-amino-acid chain; its full sequence is Late cornified envelope-like proline-rich protein 1 (98 aa).

Residues 1-26 form a disordered region; sequence MSSDDKSKSNDPKTEPKNCDPKCEQK.

It belongs to the cornifin (SPRR) family.

In Homo sapiens (Human), this protein is Late cornified envelope-like proline-rich protein 1 (LELP1).